We begin with the raw amino-acid sequence, 506 residues long: Cobyric acid synthase (506 aa).

Residues 251–448 enclose the GATase cobBQ-type domain; sequence DITIAIVQLP…LHGLFDSDAF (198 aa). The active-site Nucleophile is Cys332. His440 is a catalytic residue.

Belongs to the CobB/CobQ family. CobQ subfamily. As to quaternary structure, homodimer.

It functions in the pathway cofactor biosynthesis; adenosylcobalamin biosynthesis. In terms of biological role, catalyzes amidations at positions B, D, E, and G on adenosylcobyrinic A,C-diamide. NH(2) groups are provided by glutamine, and one molecule of ATP is hydrogenolyzed for each amidation. The chain is Cobyric acid synthase (cbiP) from Salmonella typhimurium (strain LT2 / SGSC1412 / ATCC 700720).